The primary structure comprises 226 residues: Thiamine-phosphate synthase (226 aa).

Residues 46–50 (QLRDK) and N87 contribute to the 4-amino-2-methyl-5-(diphosphooxymethyl)pyrimidine site. Positions 88 and 107 each coordinate Mg(2+). S126 is a binding site for 4-amino-2-methyl-5-(diphosphooxymethyl)pyrimidine. 152-154 (TPT) contacts 2-[(2R,5Z)-2-carboxy-4-methylthiazol-5(2H)-ylidene]ethyl phosphate. 4-amino-2-methyl-5-(diphosphooxymethyl)pyrimidine is bound at residue K155. Position 183 (G183) interacts with 2-[(2R,5Z)-2-carboxy-4-methylthiazol-5(2H)-ylidene]ethyl phosphate.

This sequence belongs to the thiamine-phosphate synthase family. The cofactor is Mg(2+).

The enzyme catalyses 2-[(2R,5Z)-2-carboxy-4-methylthiazol-5(2H)-ylidene]ethyl phosphate + 4-amino-2-methyl-5-(diphosphooxymethyl)pyrimidine + 2 H(+) = thiamine phosphate + CO2 + diphosphate. The catalysed reaction is 2-(2-carboxy-4-methylthiazol-5-yl)ethyl phosphate + 4-amino-2-methyl-5-(diphosphooxymethyl)pyrimidine + 2 H(+) = thiamine phosphate + CO2 + diphosphate. It catalyses the reaction 4-methyl-5-(2-phosphooxyethyl)-thiazole + 4-amino-2-methyl-5-(diphosphooxymethyl)pyrimidine + H(+) = thiamine phosphate + diphosphate. Its pathway is cofactor biosynthesis; thiamine diphosphate biosynthesis; thiamine phosphate from 4-amino-2-methyl-5-diphosphomethylpyrimidine and 4-methyl-5-(2-phosphoethyl)-thiazole: step 1/1. Its function is as follows. Condenses 4-methyl-5-(beta-hydroxyethyl)thiazole monophosphate (THZ-P) and 2-methyl-4-amino-5-hydroxymethyl pyrimidine pyrophosphate (HMP-PP) to form thiamine monophosphate (TMP). This Mycobacterium sp. (strain KMS) protein is Thiamine-phosphate synthase.